Reading from the N-terminus, the 304-residue chain is Protoheme IX farnesyltransferase 1 (304 aa).

A run of 8 helical transmembrane segments spans residues 24–44 (VVVLMLITSLIGMLLATKAPL), 47–67 (FVPWQVLIFGNLGIGLCAGAA), 99–119 (MALGFALLLALAGMAVLLAFT), 122–142 (LTAWLTLASLLGYAALYTGFL), 150–170 (IVIGGLAGAAPPLLGWVAITG), 176–196 (PLLLVLIIFAWTPPHFWALCI), 228–248 (LVLFAVSLMPFVIHMSGLVYL), and 280–300 (YSIVYLFLLFMALLVDHYLPL).

It belongs to the UbiA prenyltransferase family. Protoheme IX farnesyltransferase subfamily.

The protein localises to the cell inner membrane. The enzyme catalyses heme b + (2E,6E)-farnesyl diphosphate + H2O = Fe(II)-heme o + diphosphate. It participates in porphyrin-containing compound metabolism; heme O biosynthesis; heme O from protoheme: step 1/1. Functionally, converts heme B (protoheme IX) to heme O by substitution of the vinyl group on carbon 2 of heme B porphyrin ring with a hydroxyethyl farnesyl side group. The protein is Protoheme IX farnesyltransferase 1 of Pseudomonas aeruginosa (strain UCBPP-PA14).